The chain runs to 422 residues: Synaptotagmin-1 (422 aa).

Residues Met-1–Pro-57 lie on the Vesicular side of the membrane. Asn-25 carries an N-linked (GlcNAc...) asparagine glycan. The chain crosses the membrane as a helical span at residues Pro-58 to Cys-80. 5 S-palmitoyl cysteine lipidation sites follow: Cys-75, Cys-76, Cys-78, Cys-80, and Cys-83. Residues Lys-81 to Lys-422 are Cytoplasmic-facing. Residues Thr-113 to Lys-142 form a disordered region. Positions Asp-122 to Lys-134 are enriched in acidic residues. Position 129 is a phosphothreonine (Thr-129). Positions Glu-136–Asn-382 are phospholipid binding. Residues Lys-142 to Arg-261 enclose the C2 1 domain. 3 residues coordinate Ca(2+): Leu-172, Asp-173, and Asp-179. The residue at position 230 (Tyr-230) is a Phosphotyrosine. Ca(2+) contacts are provided by Asp-231, Phe-232, Asp-233, Ser-236, Lys-237, and Asp-239. A Phosphoserine modification is found at Ser-265. Positions Lys-273–His-406 constitute a C2 2 domain. 2 residues coordinate Ca(2+): Asp-304 and Asp-310. Residues Ser-343 and Ser-345 each carry the phosphoserine modification. The Ca(2+) site is built by Asp-364, Asp-366, and Asp-372.

Belongs to the synaptotagmin family. As to quaternary structure, homotetramer. Heterodimer; heterodimerizes with SYT2 in presence of calcium. Interacts with SCAMP5. Interacts with STON2. Forms a complex with SV2B, syntaxin 1 and SNAP25. Interacts with SV2A, SV2B and SV2C. Interacts with RIMS1. Interacts with PRRT2. Interacts with DNAJC5 in a phosphorylation-dependent manner. Interacts (via N-terminus) with RAB3A. Interacts with SYT12. Interacts with calmodulin. Interacts with DNM1 (via C-terminal proline-rich domain (PRD)); this interaction facilitates vesicle fission during clathrin-mediated endocytosis (CME). Requires Ca(2+) as cofactor. Glycosylated.

The protein localises to the cytoplasmic vesicle. It localises to the secretory vesicle membrane. The protein resides in the secretory vesicle. It is found in the synaptic vesicle membrane. Its subcellular location is the chromaffin granule membrane. The protein localises to the cytoplasm. Calcium sensor that participates in triggering neurotransmitter release at the synapse. May have a regulatory role in the membrane interactions during trafficking of synaptic vesicles at the active zone of the synapse. It binds acidic phospholipids with a specificity that requires the presence of both an acidic head group and a diacyl backbone. A Ca(2+)-dependent interaction between synaptotagmin and putative receptors for activated protein kinase C has also been reported. It can bind to at least three additional proteins in a Ca(2+)-independent manner; these are neurexins, syntaxin and AP2. Plays a role in dendrite formation by melanocytes. The protein is Synaptotagmin-1 of Bos taurus (Bovine).